Consider the following 1077-residue polypeptide: Ubiquitin-activating enzyme E1 2 (1077 aa).

The tract at residues serine 16–alanine 36 is disordered. Residues alanine 499, aspartate 525, arginine 536, lysine 549, and aspartate 597–asparagine 598 contribute to the ATP site. Catalysis depends on cysteine 653, which acts as the Glycyl thioester intermediate.

The protein belongs to the ubiquitin-activating E1 family. As to quaternary structure, monomer. In terms of tissue distribution, expressed in leaves, flowers, roots and stems. Detected in germinating seeds, cotyledons, hypocotyls, vascular tissues, anthers, filaments, pollen, style, stigma, sepals, petals, ovary, developing ovules, funiculi and silique walls.

The catalysed reaction is ATP + ubiquitin + [E1 ubiquitin-activating enzyme]-L-cysteine = AMP + diphosphate + S-ubiquitinyl-[E1 ubiquitin-activating enzyme]-L-cysteine.. The protein operates within protein modification; protein ubiquitination. In terms of biological role, activates ubiquitin by first adenylating its C-terminal glycine residue with ATP, and thereafter linking this residue to the side chain of a cysteine residue in E1, yielding a ubiquitin-E1 thioester and free AMP. The sequence is that of Ubiquitin-activating enzyme E1 2 (UBA2) from Arabidopsis thaliana (Mouse-ear cress).